The primary structure comprises 465 residues: uncharacterized protein (465 aa).

A helical transmembrane segment spans residues I56–F76. Residues K177–N198 are disordered. Residues L273–I293 traverse the membrane as a helical segment. Residues N411–N449 are disordered.

The protein resides in the membrane. This is an uncharacterized protein from Dictyostelium discoideum (Social amoeba).